The primary structure comprises 145 residues: D-aminoacyl-tRNA deacylase (145 aa).

Positions 137 to 138 match the Gly-cisPro motif, important for rejection of L-amino acids motif; that stretch reads GP.

This sequence belongs to the DTD family. As to quaternary structure, homodimer.

It localises to the cytoplasm. The catalysed reaction is glycyl-tRNA(Ala) + H2O = tRNA(Ala) + glycine + H(+). The enzyme catalyses a D-aminoacyl-tRNA + H2O = a tRNA + a D-alpha-amino acid + H(+). Functionally, an aminoacyl-tRNA editing enzyme that deacylates mischarged D-aminoacyl-tRNAs. Also deacylates mischarged glycyl-tRNA(Ala), protecting cells against glycine mischarging by AlaRS. Acts via tRNA-based rather than protein-based catalysis; rejects L-amino acids rather than detecting D-amino acids in the active site. By recycling D-aminoacyl-tRNA to D-amino acids and free tRNA molecules, this enzyme counteracts the toxicity associated with the formation of D-aminoacyl-tRNA entities in vivo and helps enforce protein L-homochirality. In Rhodococcus jostii (strain RHA1), this protein is D-aminoacyl-tRNA deacylase.